The following is a 75-amino-acid chain: MASQEDPVQREIHQDWANREYIEVITSSIKKIADFLNSFDMSCRSRLATLNEKLTTLERRIEYIEARVTKGETLT.

Positions 41–72 form a coiled coil; that stretch reads MSCRSRLATLNEKLTTLERRIEYIEARVTKGE.

The protein belongs to the BRK1 family.

The protein resides in the cytoplasm. The protein localises to the cytoskeleton. Functionally, involved in regulation of actin and microtubule organization. Part of a WAVE complex that activates the Arp2/3 complex. The chain is Probable protein BRICK1-B (brk1-b) from Xenopus laevis (African clawed frog).